We begin with the raw amino-acid sequence, 115 residues long: Non-specific lipid-transfer protein 3 (115 aa).

The signal sequence occupies residues 1-23; that stretch reads MAFALRFFTCLVLTVCIVASVDA. 4 cysteine pairs are disulfide-bonded: Cys-27–Cys-74, Cys-37–Cys-51, Cys-52–Cys-97, and Cys-72–Cys-111.

It belongs to the plant LTP family.

Its function is as follows. Plant non-specific lipid-transfer proteins transfer phospholipids as well as galactolipids across membranes. May play a role in wax or cutin deposition in the cell walls of expanding epidermal cells and certain secretory tissues. The sequence is that of Non-specific lipid-transfer protein 3 (LTP3) from Arabidopsis thaliana (Mouse-ear cress).